The sequence spans 485 residues: Glutamyl-tRNA(Gln) amidotransferase subunit A (485 aa).

Active-site charge relay system residues include Lys-78 and Ser-153. The Acyl-ester intermediate role is filled by Ser-177.

Belongs to the amidase family. GatA subfamily. As to quaternary structure, heterotrimer of A, B and C subunits.

It catalyses the reaction L-glutamyl-tRNA(Gln) + L-glutamine + ATP + H2O = L-glutaminyl-tRNA(Gln) + L-glutamate + ADP + phosphate + H(+). In terms of biological role, allows the formation of correctly charged Gln-tRNA(Gln) through the transamidation of misacylated Glu-tRNA(Gln) in organisms which lack glutaminyl-tRNA synthetase. The reaction takes place in the presence of glutamine and ATP through an activated gamma-phospho-Glu-tRNA(Gln). In Geotalea daltonii (strain DSM 22248 / JCM 15807 / FRC-32) (Geobacter daltonii), this protein is Glutamyl-tRNA(Gln) amidotransferase subunit A.